Here is a 356-residue protein sequence, read N- to C-terminus: Protein RecA (356 aa).

79 to 86 (GPESSGKT) contacts ATP.

Belongs to the RecA family.

It is found in the cytoplasm. Can catalyze the hydrolysis of ATP in the presence of single-stranded DNA, the ATP-dependent uptake of single-stranded DNA by duplex DNA, and the ATP-dependent hybridization of homologous single-stranded DNAs. It interacts with LexA causing its activation and leading to its autocatalytic cleavage. This is Protein RecA from Borrelia hermsii (strain HS1 / DAH).